Consider the following 523-residue polypeptide: Cyclic di-GMP binding protein BcsE (523 aa).

This sequence belongs to the BcsE family.

Its function is as follows. Required for cellulose biosynthesis. May have protease activity, but BcsA is not targeted. Binds bis-(3'-5') cyclic diguanylic acid (c-di-GMP). The protein is Cyclic di-GMP binding protein BcsE of Salmonella typhimurium (strain LT2 / SGSC1412 / ATCC 700720).